A 60-amino-acid polypeptide reads, in one-letter code: Translational regulator CsrA (60 aa).

The protein belongs to the CsrA/RsmA family. In terms of assembly, homodimer; the beta-strands of each monomer intercalate to form a hydrophobic core, while the alpha-helices form wings that extend away from the core.

Its subcellular location is the cytoplasm. In terms of biological role, a key translational regulator that binds mRNA to regulate translation initiation and/or mRNA stability. Mediates global changes in gene expression, shifting from rapid growth to stress survival by linking envelope stress, the stringent response and the catabolite repression systems. Usually binds in the 5'-UTR; binding at or near the Shine-Dalgarno sequence prevents ribosome-binding, repressing translation, binding elsewhere in the 5'-UTR can activate translation and/or stabilize the mRNA. Its function is antagonized by small RNA(s). The chain is Translational regulator CsrA from Histophilus somni (strain 2336) (Haemophilus somnus).